The sequence spans 185 residues: Ribosome-recycling factor (185 aa).

This sequence belongs to the RRF family.

It localises to the cytoplasm. In terms of biological role, responsible for the release of ribosomes from messenger RNA at the termination of protein biosynthesis. May increase the efficiency of translation by recycling ribosomes from one round of translation to another. The chain is Ribosome-recycling factor from Sulfurovum sp. (strain NBC37-1).